The sequence spans 215 residues: Chaperone protein TorD (215 aa).

The protein belongs to the TorD/DmsD family. TorD subfamily.

The protein resides in the cytoplasm. Functionally, involved in the biogenesis of TorA. Acts on TorA before the insertion of the molybdenum cofactor and, as a result, probably favors a conformation of the apoenzyme that is competent for acquiring the cofactor. This is Chaperone protein TorD from Vibrio vulnificus (strain CMCP6).